The following is a 413-amino-acid chain: NPL4-like protein 1 (413 aa).

Ser-104 carries the phosphoserine modification. The region spanning 131–272 (SVSFDRDCAN…ADVHFEPFQM (142 aa)) is the MPN domain.

Belongs to the NPL4 family.

It functions in the pathway protein degradation; proteasomal ubiquitin-dependent pathway. Its function is as follows. May be part of a complex that binds ubiquitinated proteins and that is necessary for the export of misfolded proteins from the ER to the cytoplasm, where they are degraded by the proteasome. The protein is NPL4-like protein 1 of Arabidopsis thaliana (Mouse-ear cress).